The primary structure comprises 696 residues: Macrolide export ATP-binding/permease protein MacB (696 aa).

Residues 6–244 (IELKNIERYH…KPQNKRTFID (239 aa)) enclose the ABC transporter domain. An ATP-binding site is contributed by 42–49 (GASGSGKS). A disordered region spans residues 254-287 (HNTEKLNRPNEKNNIDNDNKENNNGYNRNDNSFL). Basic and acidic residues predominate over residues 255–274 (NTEKLNRPNEKNNIDNDNKE). A compositionally biased stretch (low complexity) spans 275-284 (NNNGYNRNDN). 4 consecutive transmembrane segments (helical) span residues 324 to 344 (FLTM…IALG), 576 to 596 (IAFI…LVSV), 626 to 646 (MVSL…GGLF), and 659 to 679 (LSSF…FGYF).

This sequence belongs to the ABC transporter superfamily. Macrolide exporter (TC 3.A.1.122) family. In terms of assembly, homodimer. Part of the tripartite efflux system MacAB-TolC, which is composed of an inner membrane transporter, MacB, a periplasmic membrane fusion protein, MacA, and an outer membrane component, TolC. The complex forms a large protein conduit and can translocate molecules across both the inner and outer membranes. Interacts with MacA.

It localises to the cell inner membrane. Its function is as follows. Part of the tripartite efflux system MacAB-TolC. MacB is a non-canonical ABC transporter that contains transmembrane domains (TMD), which form a pore in the inner membrane, and an ATP-binding domain (NBD), which is responsible for energy generation. Confers resistance against macrolides. This is Macrolide export ATP-binding/permease protein MacB from Haemophilus ducreyi (strain 35000HP / ATCC 700724).